A 357-amino-acid chain; its full sequence is Histidinol-phosphate aminotransferase (357 aa).

An N6-(pyridoxal phosphate)lysine modification is found at K212.

It belongs to the class-II pyridoxal-phosphate-dependent aminotransferase family. Histidinol-phosphate aminotransferase subfamily. In terms of assembly, homodimer. Pyridoxal 5'-phosphate serves as cofactor.

The catalysed reaction is L-histidinol phosphate + 2-oxoglutarate = 3-(imidazol-4-yl)-2-oxopropyl phosphate + L-glutamate. The protein operates within amino-acid biosynthesis; L-histidine biosynthesis; L-histidine from 5-phospho-alpha-D-ribose 1-diphosphate: step 7/9. The sequence is that of Histidinol-phosphate aminotransferase from Pectobacterium carotovorum subsp. carotovorum (strain PC1).